Here is a 460-residue protein sequence, read N- to C-terminus: Bifunctional protein GlmU (460 aa).

The pyrophosphorylase stretch occupies residues 1 to 229; sequence MTNYAIILAA…FNESLGVNDR (229 aa). Residues 8 to 11, K22, Q72, and 77 to 78 each bind UDP-N-acetyl-alpha-D-glucosamine; these read LAAG and GT. D102 is a binding site for Mg(2+). UDP-N-acetyl-alpha-D-glucosamine contacts are provided by G139, E154, N169, and N227. N227 provides a ligand contact to Mg(2+). The tract at residues 230 to 250 is linker; the sequence is VALATAETVMRQRITQKHMVN. The interval 251-460 is N-acetyltransferase; the sequence is GVTFHNPETV…RLAHHPSRSK (210 aa). 2 residues coordinate UDP-N-acetyl-alpha-D-glucosamine: R332 and K350. H362 acts as the Proton acceptor in catalysis. The UDP-N-acetyl-alpha-D-glucosamine site is built by Y365 and N376. Acetyl-CoA contacts are provided by residues A379, 385-386, S404, A422, and R439; that span reads NY.

The protein in the N-terminal section; belongs to the N-acetylglucosamine-1-phosphate uridyltransferase family. In the C-terminal section; belongs to the transferase hexapeptide repeat family. As to quaternary structure, homotrimer. The cofactor is Mg(2+).

Its subcellular location is the cytoplasm. The enzyme catalyses alpha-D-glucosamine 1-phosphate + acetyl-CoA = N-acetyl-alpha-D-glucosamine 1-phosphate + CoA + H(+). The catalysed reaction is N-acetyl-alpha-D-glucosamine 1-phosphate + UTP + H(+) = UDP-N-acetyl-alpha-D-glucosamine + diphosphate. It participates in nucleotide-sugar biosynthesis; UDP-N-acetyl-alpha-D-glucosamine biosynthesis; N-acetyl-alpha-D-glucosamine 1-phosphate from alpha-D-glucosamine 6-phosphate (route II): step 2/2. It functions in the pathway nucleotide-sugar biosynthesis; UDP-N-acetyl-alpha-D-glucosamine biosynthesis; UDP-N-acetyl-alpha-D-glucosamine from N-acetyl-alpha-D-glucosamine 1-phosphate: step 1/1. Its pathway is bacterial outer membrane biogenesis; LPS lipid A biosynthesis. Catalyzes the last two sequential reactions in the de novo biosynthetic pathway for UDP-N-acetylglucosamine (UDP-GlcNAc). The C-terminal domain catalyzes the transfer of acetyl group from acetyl coenzyme A to glucosamine-1-phosphate (GlcN-1-P) to produce N-acetylglucosamine-1-phosphate (GlcNAc-1-P), which is converted into UDP-GlcNAc by the transfer of uridine 5-monophosphate (from uridine 5-triphosphate), a reaction catalyzed by the N-terminal domain. This is Bifunctional protein GlmU from Streptococcus pyogenes serotype M3 (strain ATCC BAA-595 / MGAS315).